The sequence spans 189 residues: Adenine phosphoribosyltransferase (189 aa).

The protein belongs to the purine/pyrimidine phosphoribosyltransferase family. As to quaternary structure, homodimer.

It is found in the cytoplasm. It carries out the reaction AMP + diphosphate = 5-phospho-alpha-D-ribose 1-diphosphate + adenine. It participates in purine metabolism; AMP biosynthesis via salvage pathway; AMP from adenine: step 1/1. Catalyzes a salvage reaction resulting in the formation of AMP, that is energically less costly than de novo synthesis. This is Adenine phosphoribosyltransferase from Frankia alni (strain DSM 45986 / CECT 9034 / ACN14a).